A 248-amino-acid chain; its full sequence is NADP-dependent 3-hydroxy acid dehydrogenase YdfG (248 aa).

NADP(+)-binding positions include 7–12 (GATAGF), 32–33 (RR), 54–55 (DV), and Asn81. Position 134 (Ser134) interacts with substrate. Residues Tyr147, Lys151, and 177–185 (PGLVGGTEF) each bind NADP(+). The active-site Proton acceptor is Tyr147.

It belongs to the short-chain dehydrogenases/reductases (SDR) family. As to quaternary structure, homotetramer.

It catalyses the reaction 3-hydroxypropanoate + NADP(+) = 3-oxopropanoate + NADPH + H(+). It carries out the reaction L-allo-threonine + NADP(+) = aminoacetone + CO2 + NADPH. NADP-dependent dehydrogenase with broad substrate specificity acting on 3-hydroxy acids. Catalyzes the NADP-dependent oxidation of L-allo-threonine to L-2-amino-3-keto-butyrate, which is spontaneously decarboxylated into aminoacetone. Also acts on D-threonine, L-serine, D-serine, D-3-hydroxyisobutyrate, L-3-hydroxyisobutyrate, D-glycerate and L-glycerate. Able to catalyze the reduction of the malonic semialdehyde to 3-hydroxypropionic acid. YdfG is apparently supplementing RutE, the presumed malonic semialdehyde reductase involved in pyrimidine degradation since both are able to detoxify malonic semialdehyde. The chain is NADP-dependent 3-hydroxy acid dehydrogenase YdfG from Escherichia coli (strain K12).